A 328-amino-acid polypeptide reads, in one-letter code: Beta-ketoacyl-[acyl-carrier-protein] synthase III (328 aa).

Catalysis depends on residues cysteine 122 and histidine 255. Residues 256–260 are ACP-binding; that stretch reads QANIR. Asparagine 285 is a catalytic residue.

This sequence belongs to the thiolase-like superfamily. FabH family. Homodimer.

The protein resides in the cytoplasm. It carries out the reaction malonyl-[ACP] + acetyl-CoA + H(+) = 3-oxobutanoyl-[ACP] + CO2 + CoA. It participates in lipid metabolism; fatty acid biosynthesis. Functionally, catalyzes the condensation reaction of fatty acid synthesis by the addition to an acyl acceptor of two carbons from malonyl-ACP. Catalyzes the first condensation reaction which initiates fatty acid synthesis and may therefore play a role in governing the total rate of fatty acid production. Possesses both acetoacetyl-ACP synthase and acetyl transacylase activities. Its substrate specificity determines the biosynthesis of branched-chain and/or straight-chain of fatty acids. This Janthinobacterium sp. (strain Marseille) (Minibacterium massiliensis) protein is Beta-ketoacyl-[acyl-carrier-protein] synthase III.